The sequence spans 367 residues: Molybdopterin synthase catalytic subunit (367 aa).

Substrate is bound by residues 101–102, Lys-117, and 124–126; these read HR and KKE. Positions 325 to 350 are disordered; sequence RHFTKREPSSMEAAPPKKSRKKSYSA.

This sequence belongs to the MoaE family. MOCS2B subfamily. In terms of assembly, heterotetramer; composed of 2 small (Mocs2A) and 2 large (Mocs2B) subunits. Component of the Ada2a-containing (ATAC) complex composed of at least Ada2a, Atac1, Hcf, Ada3, Gcn5, Mocs2B, Charac-14, Atac3, Atac2, NC2beta and wds.

It is found in the cytoplasm. The protein resides in the nucleus. It carries out the reaction 2 [molybdopterin-synthase sulfur-carrier protein]-C-terminal-Gly-aminoethanethioate + cyclic pyranopterin phosphate + H2O = molybdopterin + 2 [molybdopterin-synthase sulfur-carrier protein]-C-terminal Gly-Gly + 2 H(+). It functions in the pathway cofactor biosynthesis; molybdopterin biosynthesis. Catalytic subunit of the molybdopterin synthase complex, a complex that catalyzes the conversion of precursor Z into molybdopterin. Acts by mediating the incorporation of 2 sulfur atoms from thiocarboxylated Mocs2A into precursor Z to generate a dithiolene group. Involved during biosynthesis of the molybdenum cofactor. The chain is Molybdopterin synthase catalytic subunit from Drosophila melanogaster (Fruit fly).